Here is a 357-residue protein sequence, read N- to C-terminus: 3'(2'),5'-bisphosphate nucleotidase (357 aa).

Residue Asp-49 is the Proton acceptor of the active site. The Mg(2+) site is built by Glu-72, Asp-142, Ile-144, and Asp-145. Thr-147 (proton acceptor) is an active-site residue. Positions 147, 241, 264, 267, 281, and 294 each coordinate adenosine 3',5'-bisphosphate. Residues His-241, Ser-264, Lys-267, Arg-281, and Asp-294 each coordinate AMP. A Mg(2+)-binding site is contributed by Asp-294.

This sequence belongs to the inositol monophosphatase superfamily. Mg(2+) is required as a cofactor.

It is found in the cytoplasm. It localises to the nucleus. It carries out the reaction 3'-phosphoadenylyl sulfate + H2O = adenosine 5'-phosphosulfate + phosphate. The enzyme catalyses adenosine 3',5'-bisphosphate + H2O = AMP + phosphate. It catalyses the reaction adenosine 2',5'-bisphosphate + H2O = AMP + phosphate. Its activity is regulated as follows. Phosphatase activity is very sensitive to lithium and moderately sensitive to sodium. The inhibitory effects of lithium and sodium are overcome by high concentrations of potassium. Lithium exerts its inhibitory action by blocking the products of the PAP hydrolysis at the active site. Its function is as follows. Phosphatase that converts adenosine 3'-phosphate 5'-phosphosulfate (PAPS) to adenosine 5'-phosphosulfate (APS) and 3'(2')-phosphoadenosine 5'-phosphate (PAP) to AMP. May regulate the flux of sulfur in the sulfur-activation pathway by converting PAPS to APS. Involved in salt tolerance. Confers resistance to lithium. Shows no activity on inositol mono- and diphosphates, 3'-AMP, AMP, nicotinamide adenine dinucleotide phosphate (NADP), and p-nitrophenylphosphate. The protein is 3'(2'),5'-bisphosphate nucleotidase (MET22) of Saccharomyces cerevisiae (strain ATCC 204508 / S288c) (Baker's yeast).